We begin with the raw amino-acid sequence, 222 residues long: Chromatin-associated protein SWI6 (222 aa).

Residues 1 to 15 are compositionally biased toward basic and acidic residues; that stretch reads MPVIKKEELSQKKDL. Disordered stretches follow at residues 1 to 26 and 77 to 147; these read MPVI…GLED and ETQD…DRQY. The span at 16-26 shows a compositional bias: acidic residues; the sequence is ESEEEDSGLED. The Chromo domain maps to 28–87; the sequence is YEVEKVIKHRGKGKNIEFLVRWKGYGPEYDTWEPTENVASAEEAVAAYWETQDKTATAPR.

Interacts with DMT5.

The protein resides in the nucleus. Functionally, recognizes and binds histone H3 tails methylated at 'Lys-9', leading to epigenetic repression. Localizes DMT5 to heterochromatin characterized by trimethylation of histone H3 tails at 'Lys-9'. This Cryptococcus neoformans var. grubii serotype A (strain H99 / ATCC 208821 / CBS 10515 / FGSC 9487) (Filobasidiella neoformans var. grubii) protein is Chromatin-associated protein SWI6.